Reading from the N-terminus, the 768-residue chain is U-box domain-containing protein 45 (768 aa).

Residues 278–352 (VPPEELRCPI…SSWCEQNGVQ (75 aa)) form the U-box domain. 5 ARM repeats span residues 454–497 (EEAR…NLAV), 500–540 (NRNK…CLEE), 542–579 (KPVIGSSLAVPFMVNLLWTETEVQCKVDALHSLFHLST), 581–620 (PPNIPCLLSADLVNALQSLTISDEQRWTEKSLAVLLNLVL), and 623–662 (AGKDEMVSAPSLVSNLCTILDTGEPNEQEQAVSLLLILCN).

In terms of assembly, binds to SD129.

It catalyses the reaction S-ubiquitinyl-[E2 ubiquitin-conjugating enzyme]-L-cysteine + [acceptor protein]-L-lysine = [E2 ubiquitin-conjugating enzyme]-L-cysteine + N(6)-ubiquitinyl-[acceptor protein]-L-lysine.. Its pathway is protein modification; protein ubiquitination. Functions as an E3 ubiquitin ligase. This Arabidopsis thaliana (Mouse-ear cress) protein is U-box domain-containing protein 45 (PUB45).